Consider the following 152-residue polypeptide: 6,7-dimethyl-8-ribityllumazine synthase (152 aa).

Residues phenylalanine 21, alanine 55 to glutamate 57, and cysteine 79 to isoleucine 81 each bind 5-amino-6-(D-ribitylamino)uracil. Serine 84–threonine 85 is a (2S)-2-hydroxy-3-oxobutyl phosphate binding site. The active-site Proton donor is histidine 87. A 5-amino-6-(D-ribitylamino)uracil-binding site is contributed by phenylalanine 112. Arginine 126 is a binding site for (2S)-2-hydroxy-3-oxobutyl phosphate.

It belongs to the DMRL synthase family. In terms of assembly, forms an icosahedral capsid composed of 60 subunits, arranged as a dodecamer of pentamers.

It carries out the reaction (2S)-2-hydroxy-3-oxobutyl phosphate + 5-amino-6-(D-ribitylamino)uracil = 6,7-dimethyl-8-(1-D-ribityl)lumazine + phosphate + 2 H2O + H(+). The protein operates within cofactor biosynthesis; riboflavin biosynthesis; riboflavin from 2-hydroxy-3-oxobutyl phosphate and 5-amino-6-(D-ribitylamino)uracil: step 1/2. Functionally, catalyzes the formation of 6,7-dimethyl-8-ribityllumazine by condensation of 5-amino-6-(D-ribitylamino)uracil with 3,4-dihydroxy-2-butanone 4-phosphate. This is the penultimate step in the biosynthesis of riboflavin. The polypeptide is 6,7-dimethyl-8-ribityllumazine synthase (Staphylococcus saprophyticus subsp. saprophyticus (strain ATCC 15305 / DSM 20229 / NCIMB 8711 / NCTC 7292 / S-41)).